Consider the following 511-residue polypeptide: Acetylcholine receptor subunit alpha-type unc-38 (511 aa).

The N-terminal stretch at 1-16 (MRSFWLFLLLLLFCIS) is a signal peptide. Topologically, residues 17–261 (FIKLTEGNED…QLRRKPLFYT (245 aa)) are extracellular. An N-linked (GlcNAc...) asparagine glycan is attached at Asn-124. Cysteines 151 and 165 form a disulfide. A glycan (N-linked (GlcNAc...) asparagine) is linked at Asn-202. A disulfide bridge connects residues Cys-238 and Cys-239. A run of 3 helical transmembrane segments spans residues 262–282 (VNLV…FYLP), 291–311 (LCIS…EIIP), and 324–344 (LLFT…SLNL). The Cytoplasmic portion of the chain corresponds to 345-464 (HFRTPTTHLM…WKYVAMVLDR (120 aa)). Residues 465 to 485 (LFLLIFSIACFVGTVIILLRA) traverse the membrane as a helical segment.

The protein belongs to the ligand-gated ion channel (TC 1.A.9) family. Acetylcholine receptor (TC 1.A.9.1) subfamily. In terms of assembly, component of nicotinic acetylcholine receptor. In muscles, composed of 2 non-alpha subunits lev-1 and unc-29, and 3 alpha subunits unc-38, unc-63 and lev-8. In cholinergic motoneurons, composed of 2 non-alpha subunits acr-2 and acr-3, and 3 alpha subunits unc-38, unc-63 and acr-12.

The protein localises to the postsynaptic cell membrane. It localises to the cell membrane. Functionally, alpha subunit of nicotinic acetylcholine receptor (nAChR). Probably acts in cholinergic motoneurons to regulate presynaptic neurotransmitter release, thereby ensuring normal level of excitation of cholinergic motoneurons during locomotion. Involved in nAChR sensitivity to nicotine. This Caenorhabditis elegans protein is Acetylcholine receptor subunit alpha-type unc-38 (unc-38).